The primary structure comprises 328 residues: tRNA uridine(34) hydroxylase (328 aa).

One can recognise a Rhodanese domain in the interval 130–224 (LDKDTVVLDT…YGKDPEVQGE (95 aa)). Catalysis depends on Cys-184, which acts as the Cysteine persulfide intermediate.

The protein belongs to the TrhO family.

It carries out the reaction uridine(34) in tRNA + AH2 + O2 = 5-hydroxyuridine(34) in tRNA + A + H2O. Its function is as follows. Catalyzes oxygen-dependent 5-hydroxyuridine (ho5U) modification at position 34 in tRNAs. The chain is tRNA uridine(34) hydroxylase from Streptococcus pneumoniae (strain ATCC 700669 / Spain 23F-1).